The sequence spans 1486 residues: Homeobox protein cut-like 2 (1486 aa).

The disordered stretch occupies residues 114–167 (DRLQPPSFDPSGQPRRDLHTSWKRNPELLSPKEQREGTSPAGPTLTEGSRLPGI). Residues 127–149 (PRRDLHTSWKRNPELLSPKEQRE) show a composition bias toward basic and acidic residues. A Phosphoserine modification is found at serine 143. Residues 195–374 (TLAARLGEAE…IKTELSILKA (180 aa)) adopt a coiled-coil conformation. Disordered stretches follow at residues 415–481 (LLAS…LSPF), 517–549 (PTAP…PGAE), 661–690 (EIES…STSE), 716–758 (VAPR…AQAP), 800–858 (YASV…EGAT), and 964–1032 (GQAV…SGSQ). Acidic residues predominate over residues 419 to 428 (PEEDPSEDDS). Pro residues predominate over residues 443–460 (QQLPPPPGPEDPLSPSPG). Residues 461-470 (QPLLGPSLGP) show a composition bias toward low complexity. Over residues 517–532 (PTAPATPAPGPEPLGG) the composition is skewed to pro residues. The CUT 1 DNA-binding region spans 544-631 (AGPGAEEEQL…VLALRTIQVR (88 aa)). Positions 680–690 (ANGTTPASTSE) are enriched in polar residues. Residues 690-717 (EDAIKSILEQARREMQAQQQALLEMEVA) adopt a coiled-coil conformation. Residues 802 to 816 (SVSPSLSSSSSSGYS) show a composition bias toward low complexity. Residues 834–844 (PEDEAAAGAED) show a composition bias toward acidic residues. The span at 845–854 (EPPRTGELKA) shows a compositional bias: basic and acidic residues. The CUT 2 DNA-binding region spans 887-974 (QYELYMYREV…QAVGQQPGAS (88 aa)). Residues 967 to 976 (VGQQPGASQA) show a composition bias toward polar residues. The span at 1017-1031 (GRSSSSLSGKMYSGS) shows a compositional bias: low complexity. Positions 1038-1125 (QEIVAMSPEL…VEKLRDMKKL (88 aa)) form a DNA-binding region, CUT 3. A DNA-binding region (homeobox) is located at residues 1168–1227 (IKKPRVVLAPEEKEALRKAYQLEPYPSQQTIELLSFQLNLKTNTVINWFHNYRSRMRREM). Residues 1231–1453 (GTQDEPDLDP…ALHPSAKVNP (223 aa)) are disordered. The span at 1266-1276 (EDQKPTVKELE) shows a compositional bias: basic and acidic residues. The segment covering 1283–1293 (ENSTPLTTQDK) has biased composition (polar residues). The span at 1320 to 1334 (ELDKGQGPPKEEHPD) shows a compositional bias: basic and acidic residues. Polar residues predominate over residues 1381–1401 (KSASESSRCSLEVSLNSPSAA). Residues 1402–1420 (SSPGLMMSVSPVPSSSAPI) are compositionally biased toward low complexity. Positions 1421–1431 (SPSPPGAPPAK) are enriched in pro residues.

Belongs to the CUT homeobox family.

The protein resides in the nucleus. Transcription factor involved in the control of neuronal proliferation and differentiation in the brain. Regulates dendrite development and branching, dendritic spine formation, and synaptogenesis in cortical layers II-III. Binds to DNA in a sequence-specific manner. In Homo sapiens (Human), this protein is Homeobox protein cut-like 2 (CUX2).